We begin with the raw amino-acid sequence, 102 residues long: ATP-dependent Clp protease adapter protein ClpS (102 aa).

The protein belongs to the ClpS family. In terms of assembly, binds to the N-terminal domain of the chaperone ClpA.

Involved in the modulation of the specificity of the ClpAP-mediated ATP-dependent protein degradation. This Shewanella frigidimarina (strain NCIMB 400) protein is ATP-dependent Clp protease adapter protein ClpS.